An 82-amino-acid chain; its full sequence is RNA-binding protein Hfq (82 aa).

The region spanning 10–70 (DAFLNQVRKD…ISTVAPLRPI (61 aa)) is the Sm domain.

It belongs to the Hfq family. Homohexamer.

RNA chaperone that binds small regulatory RNA (sRNAs) and mRNAs to facilitate mRNA translational regulation in response to envelope stress, environmental stress and changes in metabolite concentrations. Also binds with high specificity to tRNAs. In Syntrophomonas wolfei subsp. wolfei (strain DSM 2245B / Goettingen), this protein is RNA-binding protein Hfq.